Reading from the N-terminus, the 348-residue chain is Histone PARylation factor 1 (348 aa).

The span at methionine 1 to arginine 10 shows a compositional bias: basic residues. The interval methionine 1–glutamate 38 is disordered. Residues glutamate 21–glutamate 38 show a composition bias toward basic and acidic residues. The stretch at leucine 170–leucine 200 forms a coiled coil. Glutamate 285 functions as the Proton donor in the catalytic mechanism.

Belongs to the HPF1 family. As to quaternary structure, interacts with PARP1 (via the PARP catalytic domain). Interacts with PARP2 (via the PARP catalytic domain). Interacts with core nucleosomes in a parp1- and parp2-dependent manner. In adult, mainly expressed in gonads.

It is found in the chromosome. The protein resides in the nucleus. Functionally, cofactor for serine ADP-ribosylation that confers serine specificity on parp1 and parp2 and plays a key role in DNA damage response. Initiates the repair of double-strand DNA breaks: recruited to DNA damage sites by parp1 and parp2 and switches the amino acid specificity of parp1 and parp2 from aspartate or glutamate to serine residues, licensing serine ADP-ribosylation of target proteins. Serine ADP-ribosylation of target proteins, such as histones, promotes decompaction of chromatin and the recruitment of repair factors leading to the reparation of DNA strand breaks. Serine ADP-ribosylation of proteins constitutes the primary form of ADP-ribosylation of proteins in response to DNA damage. Hpf1 acts by completing the active site of parp1 and parp2: forms a composite active site composed of residues from Hpf1 and parp1 or parp2. While hpf1 promotes the initiation of serine ADP-ribosylation, it restricts the polymerase activity of parp1 and parp2 in order to limit the length of poly-ADP-ribose chains. Hpf1 also promotes tyrosine ADP-ribosylation, probably by conferring tyrosine specificity on parp1. This chain is Histone PARylation factor 1, found in Danio rerio (Zebrafish).